Consider the following 66-residue polypeptide: MCLSLLKRIFLIHFSIYTWKQSHRLLLLECLMSRSYLLNLHISNHFHPIDQHLVHCLSLCTIQKMI.

This is an uncharacterized protein from Saccharomyces cerevisiae (strain ATCC 204508 / S288c) (Baker's yeast).